Consider the following 296-residue polypeptide: Acetaldehyde dehydrogenase (296 aa).

15–18 contributes to the NAD(+) binding site; it reads SGNI. Residue C132 is the Acyl-thioester intermediate of the active site. NAD(+) contacts are provided by residues 164 to 172 and N274; that span reads SAGPATRAN.

This sequence belongs to the acetaldehyde dehydrogenase family. In terms of assembly, interacts with MhpE.

It catalyses the reaction acetaldehyde + NAD(+) + CoA = acetyl-CoA + NADH + H(+). Its pathway is aromatic compound metabolism; 3-phenylpropanoate degradation. Catalyzes the conversion of acetaldehyde to acetyl-CoA, using NAD(+) and coenzyme A. Is the final enzyme in the meta-cleavage pathway for the degradation of aromatic compounds. In Pectobacterium atrosepticum (strain SCRI 1043 / ATCC BAA-672) (Erwinia carotovora subsp. atroseptica), this protein is Acetaldehyde dehydrogenase.